We begin with the raw amino-acid sequence, 126 residues long: Large ribosomal subunit protein bL12 (126 aa).

The protein belongs to the bacterial ribosomal protein bL12 family. Homodimer. Part of the ribosomal stalk of the 50S ribosomal subunit. Forms a multimeric L10(L12)X complex, where L10 forms an elongated spine to which 2 to 4 L12 dimers bind in a sequential fashion. Binds GTP-bound translation factors.

In terms of biological role, forms part of the ribosomal stalk which helps the ribosome interact with GTP-bound translation factors. Is thus essential for accurate translation. This Methylorubrum populi (strain ATCC BAA-705 / NCIMB 13946 / BJ001) (Methylobacterium populi) protein is Large ribosomal subunit protein bL12.